A 121-amino-acid polypeptide reads, in one-letter code: Small ribosomal subunit protein uS13 (121 aa).

Residues 93 to 121 (RGLPMRGQRTRTNARTRKGPRKSAAALKK) are disordered.

The protein belongs to the universal ribosomal protein uS13 family. In terms of assembly, part of the 30S ribosomal subunit. Forms a loose heterodimer with protein S19. Forms two bridges to the 50S subunit in the 70S ribosome.

Located at the top of the head of the 30S subunit, it contacts several helices of the 16S rRNA. In the 70S ribosome it contacts the 23S rRNA (bridge B1a) and protein L5 of the 50S subunit (bridge B1b), connecting the 2 subunits; these bridges are implicated in subunit movement. Contacts the tRNAs in the A and P-sites. This Methylibium petroleiphilum (strain ATCC BAA-1232 / LMG 22953 / PM1) protein is Small ribosomal subunit protein uS13.